The chain runs to 353 residues: MEVSKEMLFEELDNYSYALDYYSQESDPEEKVYLGLVHWISLFLYALAFVLGIPGNAIVIWLMGFKWKKTVTTLWFLNLAIADFIFVLFLPLYISYVALSFHWPFGLWLCKVNSFIAQLNMFSSVFFLTVISLDRYIHLLHPGLSHRHRTLKSSLVVVILVWLLASLLGGPTLYFRDTMEVNNHIICYNNFQEHELTLMRHHVLTWVKFLFGYLFPLLTMSSCYLCLIFKMKKRNILISRKHLWMILSVVIAFLVCWTPYHLFSIWELSIHHNSSFQNVLQGGIPLSTGLAFLNSCLNPILYVLISKTFQARFRASVAEVLKRSLWEASCSGTVSEQLRSAETKSLSLLETAQ.

The Extracellular segment spans residues 1 to 41 (MEVSKEMLFEELDNYSYALDYYSQESDPEEKVYLGLVHWIS). N-linked (GlcNAc...) asparagine glycosylation occurs at N14. A helical membrane pass occupies residues 42–62 (LFLYALAFVLGIPGNAIVIWL). At 63-73 (MGFKWKKTVTT) the chain is on the cytoplasmic side. Residues 74–94 (LWFLNLAIADFIFVLFLPLYI) traverse the membrane as a helical segment. At 95-112 (SYVALSFHWPFGLWLCKV) the chain is on the extracellular side. C110 and C187 form a disulfide bridge. The chain crosses the membrane as a helical span at residues 113 to 133 (NSFIAQLNMFSSVFFLTVISL). The Cytoplasmic segment spans residues 134–154 (DRYIHLLHPGLSHRHRTLKSS). A helical membrane pass occupies residues 155–175 (LVVVILVWLLASLLGGPTLYF). Topologically, residues 176-210 (RDTMEVNNHIICYNNFQEHELTLMRHHVLTWVKFL) are extracellular. The helical transmembrane segment at 211–231 (FGYLFPLLTMSSCYLCLIFKM) threads the bilayer. The Cytoplasmic portion of the chain corresponds to 232–247 (KKRNILISRKHLWMIL). Residues 248–268 (SVVIAFLVCWTPYHLFSIWEL) form a helical membrane-spanning segment. The Extracellular segment spans residues 269–286 (SIHHNSSFQNVLQGGIPL). A helical membrane pass occupies residues 287–307 (STGLAFLNSCLNPILYVLISK). The Cytoplasmic portion of the chain corresponds to 308–353 (TFQARFRASVAEVLKRSLWEASCSGTVSEQLRSAETKSLSLLETAQ).

The protein belongs to the chemokine-like receptor (CMKLR) family. As to expression, high expressed in white adipose tissue and skeletal muscle. Expressed in hippocampus and cortex.

The protein localises to the cell membrane. Receptor for chemoattractant adipokine chemerin/RARRES2 suggesting a role for this receptor in the regulation of inflammation and energy homesotasis. Signals mainly via beta-arrestin pathway. Binding of RARRES2 activates weakly G proteins, calcium mobilization and MAPK1/MAPK3 (ERK1/2) phosphorylation too. Acts also as a receptor for TAFA1, mediates its effects on neuronal stem-cell proliferation and differentiation via the activation of ROCK/ERK and ROCK/STAT3 signaling pathway. This Mus musculus (Mouse) protein is Chemerin-like receptor 2 (Cmklr2).